The primary structure comprises 498 residues: ATP synthase subunit beta, chloroplastic (498 aa).

172 to 179 lines the ATP pocket; sequence GGAGVGKT.

It belongs to the ATPase alpha/beta chains family. In terms of assembly, F-type ATPases have 2 components, CF(1) - the catalytic core - and CF(0) - the membrane proton channel. CF(1) has five subunits: alpha(3), beta(3), gamma(1), delta(1), epsilon(1). CF(0) has four main subunits: a(1), b(1), b'(1) and c(9-12).

It is found in the plastid. The protein resides in the chloroplast thylakoid membrane. It catalyses the reaction ATP + H2O + 4 H(+)(in) = ADP + phosphate + 5 H(+)(out). In terms of biological role, produces ATP from ADP in the presence of a proton gradient across the membrane. The catalytic sites are hosted primarily by the beta subunits. The chain is ATP synthase subunit beta, chloroplastic from Cinnamomum camphora (Camphor tree).